Here is a 241-residue protein sequence, read N- to C-terminus: DnaJ homolog subfamily B member 6 (241 aa).

Positions 2-146 (VDYYEVLGVQ…TGSFFSAFSG (145 aa)) are interaction with HSP70. In terms of domain architecture, J spans 3 to 69 (DYYEVLGVQR…KKRDIYDKYG (67 aa)). The segment at 119-241 (FEDFFGNRRG…KEQLLRLDNK (123 aa)) is interaction with KRT18. Arg135 is modified (omega-N-methylarginine).

Homooligomer. Interacts with BAG3, HSPB8 and STUB1. Interacts with ALKBH1. Interacts with HSP70, KRT18 and PTTG.

The protein localises to the cytoplasm. The protein resides in the perinuclear region. Its subcellular location is the nucleus. It is found in the myofibril. It localises to the sarcomere. The protein localises to the z line. Has a stimulatory effect on the ATPase activity of HSP70 in a dose-dependent and time-dependent manner and hence acts as a co-chaperone of HSP70. Plays an indispensable role in the organization of KRT8/KRT18 filaments. Acts as an endogenous molecular chaperone for neuronal proteins including huntingtin. Suppresses aggregation and toxicity of polyglutamine-containing, aggregation-prone proteins. Also reduces cellular toxicity and caspase-3 activity. This chain is DnaJ homolog subfamily B member 6, found in Macaca fascicularis (Crab-eating macaque).